Consider the following 203-residue polypeptide: High frequency lysogenization protein HflD homolog (203 aa).

Belongs to the HflD family.

The protein localises to the cytoplasm. It is found in the cell inner membrane. The chain is High frequency lysogenization protein HflD homolog from Pasteurella multocida (strain Pm70).